The primary structure comprises 76 residues: Peptide ARACIN 1 (76 aa).

A signal peptide spans 1 to 22 (MAMKTSHVLLLCLMFVIGFVEA). A propeptide spans 23 to 35 (RRSDTGPDISTPP) (removed in mature form). The SxS motif essential for MIK2 binding signature appears at 36-38 (SGS). The SCOOP motif signature appears at 36–49 (SGSCGASIAEFNSS). The segment at 56–76 (APPCRRPRLQNSEDVTHTTLP) is disordered. A compositionally biased stretch (polar residues) spans 64–76 (LQNSEDVTHTTLP).

The protein belongs to the serine rich endogenous peptide (SCOOP) phytocytokine family. In terms of assembly, interacts with MIK2 (via extracellular leucine-rich repeat domain); this interaction triggers the formation of complex between MIK2 and the BAK1/SERK3 and SERK4 coreceptors, and subsequent BAK1 activation by phosphorylation. In terms of tissue distribution, mainly expressed in young developing leaves, hydathodes, immature flowers and elongating pollen tubes.

It localises to the cell membrane. The protein localises to the secreted. Its subcellular location is the extracellular space. The protein resides in the apoplast. It is found in the endoplasmic reticulum. Functionally, brassicaceae-specific phytocytokine (plant endogenous peptide released into the apoplast) perceived by MIK2 in a BAK1/SERK3 and SERK4 coreceptors-dependent manner, that modulates various physiological and antimicrobial processes including growth prevention and reactive oxygen species (ROS) response regulation. Inhibits the fungal growth of Alternaria brassicicola, Sclerotinia sclerotiorum, Fusarium graminearum, yeast (Saccharomyces) and Botrytis cinerea, thus being an antimicrobial peptide (AMP). Promotes resistance to A.brassicicola and B.cinerea. In Arabidopsis thaliana (Mouse-ear cress), this protein is Peptide ARACIN 1.